The primary structure comprises 68 residues: Riparin-1.5 amide (68 aa).

Positions 1 to 15 are cleaved as a signal peptide; sequence MKIIVVLAVLMLVSA. A propeptide spanning residues 16-41 is cleaved from the precursor; it reads QVCLVSAAEMGHSSDNELSSRDLVKR. C47 and C53 are joined by a disulfide. The residue at position 53 (C53) is a Cysteine amide. A propeptide spanning residues 57-68 is cleaved from the precursor; sequence SIESSEGANGGE.

As to expression, expressed by the skin glands.

It localises to the secreted. The sequence is that of Riparin-1.5 amide from Crinia riparia (Streambank froglet).